A 688-amino-acid polypeptide reads, in one-letter code: PTS system glucoside-specific EIICBA component (688 aa).

The region spanning 3–427 (KKLFGQLQRI…FKLKTPGRED (425 aa)) is the PTS EIIC type-1 domain. 10 helical membrane-spanning segments follow: residues 12–32 (IGKA…LLAF), 81–101 (LGLA…YLIM), 137–157 (LVLG…MGAL), 182–202 (FVPI…SFAW), 223–243 (LTTF…LHHI), 284–304 (AFTT…AFAI), 315–335 (VVGG…ITEP), 340–360 (FLFV…TSFL), 364–384 (LLGV…ILYG), and 395–415 (LVIP…DFAI). The region spanning 438 to 519 (AKLPFDVLDA…AKIMSGEITK (82 aa)) is the PTS EIIB type-1 domain. Cys-460 acts as the Phosphocysteine intermediate; for EIIB activity in catalysis. In terms of domain architecture, PTS EIIA type-1 spans 560 to 664 (DQVFAGKMMG…SIVTPMIITN (105 aa)). His-612 acts as the Tele-phosphohistidine intermediate; for EIIA activity in catalysis.

The protein resides in the cell membrane. In terms of biological role, the phosphoenolpyruvate-dependent sugar phosphotransferase system (sugar PTS), a major carbohydrate active -transport system, catalyzes the phosphorylation of incoming sugar substrates concomitantly with their translocation across the cell membrane. This system is involved in alpha- and beta-glucoside transport. In Staphylococcus aureus (strain bovine RF122 / ET3-1), this protein is PTS system glucoside-specific EIICBA component (glcB).